A 294-amino-acid chain; its full sequence is Putative deoxyribonuclease TATDN3 (294 aa).

Zn(2+) is bound by residues His-9, His-11, Glu-104, His-144, His-167, and Asp-215.

This sequence belongs to the metallo-dependent hydrolases superfamily. TatD-type hydrolase family. Requires Mn(2+) as cofactor. The cofactor is Ca(2+). It depends on Mg(2+) as a cofactor. Zn(2+) is required as a cofactor.

It localises to the nucleus. The 3'-exonuclease activity is sensitive to the metal ion present in the active site, whereas the AP endodeoxyribonuclease activity is observed in a variety of divalent metal cofactors. 3'-exoxonuclease activity is suppressed in the presence of Ca(2+), Zn(2+) and Ni(2+). Exhibits 3'-exonuclease activities and apurinic/apyrimidinic (AP) endonuclease (in vitro). Show preferential AP endonuclease activity on double-stranded DNA substrates and 3'- exonuclease activity on single-stranded DNA. The protein is Putative deoxyribonuclease TATDN3 (Tatdn3) of Mus musculus (Mouse).